Reading from the N-terminus, the 447-residue chain is Argininosuccinate synthase (447 aa).

Residues 17-25 and A43 each bind ATP; that span reads AFSGGLDTS. Y99 lines the L-citrulline pocket. Residues G129 and T131 each contribute to the ATP site. The L-aspartate site is built by T131, N135, and D136. N135 is a binding site for L-citrulline. D136 contacts ATP. Residues R139 and S192 each coordinate L-citrulline. Residue D194 participates in ATP binding. Positions 201, 203, and 280 each coordinate L-citrulline.

Belongs to the argininosuccinate synthase family. Type 2 subfamily. As to quaternary structure, homotetramer.

The protein localises to the cytoplasm. The catalysed reaction is L-citrulline + L-aspartate + ATP = 2-(N(omega)-L-arginino)succinate + AMP + diphosphate + H(+). The protein operates within amino-acid biosynthesis; L-arginine biosynthesis; L-arginine from L-ornithine and carbamoyl phosphate: step 2/3. The chain is Argininosuccinate synthase from Escherichia coli O127:H6 (strain E2348/69 / EPEC).